The chain runs to 219 residues: Suppressor-of-stellate-like protein (219 aa).

Positions 194–219 (SAESPPIKVESSVSKSPSWLRNVPNF) are disordered. Over residues 204-219 (SSVSKSPSWLRNVPNF) the composition is skewed to polar residues.

Belongs to the casein kinase 2 subunit beta family.

The polypeptide is Suppressor-of-stellate-like protein (Ssl) (Drosophila melanogaster (Fruit fly)).